Reading from the N-terminus, the 636-residue chain is LDL receptor repeat-containing protein egg-1 (636 aa).

Residues 1–130 lie on the Cytoplasmic side of the membrane; that stretch reads MSSIAQKNRN…NHSNLFQCPS (130 aa). A helical; Signal-anchor for type II membrane protein membrane pass occupies residues 131 to 151; the sequence is VAIVLVLALVILGVLAAIPLT. The Extracellular portion of the chain corresponds to 152–636; it reads LMLTSSAQKM…VLKNSGRFPY (485 aa). An N-linked (GlcNAc...) asparagine glycan is attached at N202. LDL-receptor class A domains follow at residues 205 to 243, 244 to 296, 298 to 335, 336 to 375, 378 to 415, 457 to 499, 503 to 541, and 542 to 579; these read TCSG…ENCK, ECQS…AMCK, TCSK…NNCN, KCQK…QQCD, TCSG…ENCP, KCHP…KNCT, ECGI…QNCS, and QCAS…LKCS. Cystine bridges form between C213/C233, C227/C242, C245/C273, C251/C286, C280/C295, C299/C312, C306/C325, C319/C334, C337/C365, C359/C374, C379/C392, C387/C405, C399/C414, C458/C476, C466/C489, C483/C498, C504/C518, C514/C531, C525/C540, C543/C556, C550/C569, and C563/C578. N508 carries N-linked (GlcNAc...) asparagine glycosylation. An N-linked (GlcNAc...) asparagine glycan is attached at N614.

The protein localises to the cell membrane. In terms of biological role, probable receptor which is required for the oocyte-to-zygote transition although its exact function is controversial. Seems to be required for fertilization probably by promoting the interaction or fusion between sperm and oocyte. Conversely, shown to be dispensable for fertilization but required for the formation of a continuous and cohesive eggshell chitin layer by maintaining a homogenous distribution of chitin synthase chs-1 at the unfertilized oocyte cell membrane. Appears to recruit or maintain together to the unfertilized oocyte cortex several proteins including chs-1, kinase mbk-2 and pseudophosphatases egg-3, and possibly egg-4 and egg-5. This Caenorhabditis briggsae protein is LDL receptor repeat-containing protein egg-1.